The following is a 1072-amino-acid chain: DNA-directed RNA polymerase subunit beta (1072 aa).

It belongs to the RNA polymerase beta chain family. In plastids the minimal PEP RNA polymerase catalytic core is composed of four subunits: alpha, beta, beta', and beta''. When a (nuclear-encoded) sigma factor is associated with the core the holoenzyme is formed, which can initiate transcription.

The protein localises to the plastid. The protein resides in the chloroplast. It carries out the reaction RNA(n) + a ribonucleoside 5'-triphosphate = RNA(n+1) + diphosphate. In terms of biological role, DNA-dependent RNA polymerase catalyzes the transcription of DNA into RNA using the four ribonucleoside triphosphates as substrates. This Crucihimalaya wallichii (Rock-cress) protein is DNA-directed RNA polymerase subunit beta.